The following is a 197-amino-acid chain: Protein GrpE (197 aa).

Over residues 1 to 12 (MTDSDGKTDKSG) the composition is skewed to basic and acidic residues. The segment at 1–35 (MTDSDGKTDKSGEPAAEVEPVVSKPYVMPDDPEDD) is disordered.

The protein belongs to the GrpE family. As to quaternary structure, homodimer.

The protein resides in the cytoplasm. Functionally, participates actively in the response to hyperosmotic and heat shock by preventing the aggregation of stress-denatured proteins, in association with DnaK and GrpE. It is the nucleotide exchange factor for DnaK and may function as a thermosensor. Unfolded proteins bind initially to DnaJ; upon interaction with the DnaJ-bound protein, DnaK hydrolyzes its bound ATP, resulting in the formation of a stable complex. GrpE releases ADP from DnaK; ATP binding to DnaK triggers the release of the substrate protein, thus completing the reaction cycle. Several rounds of ATP-dependent interactions between DnaJ, DnaK and GrpE are required for fully efficient folding. This is Protein GrpE from Nitrobacter winogradskyi (strain ATCC 25391 / DSM 10237 / CIP 104748 / NCIMB 11846 / Nb-255).